A 417-amino-acid polypeptide reads, in one-letter code: Serine hydroxymethyltransferase (417 aa).

(6S)-5,6,7,8-tetrahydrofolate contacts are provided by residues leucine 121 and 125 to 127; that span reads GHL. Lysine 229 bears the N6-(pyridoxal phosphate)lysine mark. Position 355-357 (355-357) interacts with (6S)-5,6,7,8-tetrahydrofolate; the sequence is SPF.

Belongs to the SHMT family. As to quaternary structure, homodimer. Pyridoxal 5'-phosphate serves as cofactor.

The protein localises to the cytoplasm. The catalysed reaction is (6R)-5,10-methylene-5,6,7,8-tetrahydrofolate + glycine + H2O = (6S)-5,6,7,8-tetrahydrofolate + L-serine. It participates in one-carbon metabolism; tetrahydrofolate interconversion. It functions in the pathway amino-acid biosynthesis; glycine biosynthesis; glycine from L-serine: step 1/1. Its function is as follows. Catalyzes the reversible interconversion of serine and glycine with tetrahydrofolate (THF) serving as the one-carbon carrier. This reaction serves as the major source of one-carbon groups required for the biosynthesis of purines, thymidylate, methionine, and other important biomolecules. Also exhibits THF-independent aldolase activity toward beta-hydroxyamino acids, producing glycine and aldehydes, via a retro-aldol mechanism. This chain is Serine hydroxymethyltransferase, found in Tolumonas auensis (strain DSM 9187 / NBRC 110442 / TA 4).